A 435-amino-acid polypeptide reads, in one-letter code: F-box/FBD/LRR-repeat protein At1g51370 (435 aa).

An F-box domain is found at 18–64 (EDRISQLPEPLISEILFHLSTKDSVRTSALSTKWRYLWQSVPGLDLD). LRR repeat units follow at residues 123-148 (VHCF…RLRW), 170-195 (VSYP…ILFS), 234-259 (AKMY…DFVN), 262-287 (GRYQ…VISS), and 314-340 (RFYI…ILEM). The FBD domain maps to 354 to 406 (EPNVMVSTVPWCLVSSLKFVELKRSIPRYEGEMELVRYVLTNSTVLKKLRLNV).

This Arabidopsis thaliana (Mouse-ear cress) protein is F-box/FBD/LRR-repeat protein At1g51370.